The chain runs to 120 residues: NAD(P)H-quinone oxidoreductase subunit 3, chloroplastic (120 aa).

A run of 3 helical transmembrane segments spans residues 7 to 27 (YNYF…AFSI), 64 to 84 (MFAL…PWAM), and 89 to 109 (LGIP…IGLI).

Belongs to the complex I subunit 3 family. NDH is composed of at least 16 different subunits, 5 of which are encoded in the nucleus.

Its subcellular location is the plastid. It is found in the chloroplast thylakoid membrane. The catalysed reaction is a plastoquinone + NADH + (n+1) H(+)(in) = a plastoquinol + NAD(+) + n H(+)(out). It catalyses the reaction a plastoquinone + NADPH + (n+1) H(+)(in) = a plastoquinol + NADP(+) + n H(+)(out). Functionally, NDH shuttles electrons from NAD(P)H:plastoquinone, via FMN and iron-sulfur (Fe-S) centers, to quinones in the photosynthetic chain and possibly in a chloroplast respiratory chain. The immediate electron acceptor for the enzyme in this species is believed to be plastoquinone. Couples the redox reaction to proton translocation, and thus conserves the redox energy in a proton gradient. This Anthoceros angustus (Hornwort) protein is NAD(P)H-quinone oxidoreductase subunit 3, chloroplastic.